The sequence spans 214 residues: Leucyl/phenylalanyl-tRNA--protein transferase (214 aa).

Residues 194–214 (FAPPGYSPDPASVVQRSSQTS) form a disordered region.

The protein belongs to the L/F-transferase family.

Its subcellular location is the cytoplasm. The enzyme catalyses N-terminal L-lysyl-[protein] + L-leucyl-tRNA(Leu) = N-terminal L-leucyl-L-lysyl-[protein] + tRNA(Leu) + H(+). It catalyses the reaction N-terminal L-arginyl-[protein] + L-leucyl-tRNA(Leu) = N-terminal L-leucyl-L-arginyl-[protein] + tRNA(Leu) + H(+). It carries out the reaction L-phenylalanyl-tRNA(Phe) + an N-terminal L-alpha-aminoacyl-[protein] = an N-terminal L-phenylalanyl-L-alpha-aminoacyl-[protein] + tRNA(Phe). Its function is as follows. Functions in the N-end rule pathway of protein degradation where it conjugates Leu, Phe and, less efficiently, Met from aminoacyl-tRNAs to the N-termini of proteins containing an N-terminal arginine or lysine. This is Leucyl/phenylalanyl-tRNA--protein transferase from Cereibacter sphaeroides (strain ATCC 17025 / ATH 2.4.3) (Rhodobacter sphaeroides).